A 152-amino-acid chain; its full sequence is Lipoprotein signal peptidase (152 aa).

2 helical membrane-spanning segments follow: residues 55-75 (NKMW…VFYM) and 85-105 (LGIS…DRVF). Catalysis depends on residues D111 and D129. A helical membrane pass occupies residues 124-144 (VFNIADSALCIGVVLIIIQTL).

Belongs to the peptidase A8 family.

It is found in the cell membrane. It catalyses the reaction Release of signal peptides from bacterial membrane prolipoproteins. Hydrolyzes -Xaa-Yaa-Zaa-|-(S,diacylglyceryl)Cys-, in which Xaa is hydrophobic (preferably Leu), and Yaa (Ala or Ser) and Zaa (Gly or Ala) have small, neutral side chains.. It participates in protein modification; lipoprotein biosynthesis (signal peptide cleavage). Functionally, this protein specifically catalyzes the removal of signal peptides from prolipoproteins. In Bacillus cereus (strain ZK / E33L), this protein is Lipoprotein signal peptidase.